A 534-amino-acid polypeptide reads, in one-letter code: NAD(P)H-quinone oxidoreductase chain 4 2 (534 aa).

The next 14 helical transmembrane spans lie at 9 to 29 (FPWL…IPLI), 51 to 71 (WFAL…FYVG), 106 to 126 (LILL…PVTL), 130 to 150 (LFYF…AVQD), 152 to 172 (LLFF…LSIW), 184 to 204 (FILY…AMAF), 227 to 247 (LLMY…FPLH), 258 to 278 (TAPV…YALM), 290 to 310 (LYFA…AALT), 326 to 346 (ISHM…GMSG), 347 to 367 (AMLQ…LVGA), 399 to 419 (LASL…VFIG), 432 to 452 (LVVV…LLSM), and 479 to 499 (VFII…PKLV).

This sequence belongs to the complex I subunit 4 family.

The protein localises to the cellular thylakoid membrane. The enzyme catalyses a plastoquinone + NADH + (n+1) H(+)(in) = a plastoquinol + NAD(+) + n H(+)(out). It catalyses the reaction a plastoquinone + NADPH + (n+1) H(+)(in) = a plastoquinol + NADP(+) + n H(+)(out). In terms of biological role, NDH-1 shuttles electrons from NAD(P)H, via FMN and iron-sulfur (Fe-S) centers, to quinones in the respiratory chain. The immediate electron acceptor for the enzyme in this species is believed to be plastoquinone. Couples the redox reaction to proton translocation (for every two electrons transferred, four hydrogen ions are translocated across the cytoplasmic membrane), and thus conserves the redox energy in a proton gradient. This is NAD(P)H-quinone oxidoreductase chain 4 2 from Synechococcus sp. (strain JA-2-3B'a(2-13)) (Cyanobacteria bacterium Yellowstone B-Prime).